We begin with the raw amino-acid sequence, 246 residues long: U11/U12 small nuclear ribonucleoprotein 35 kDa protein (246 aa).

Residues 51 to 129 (LTLFVARLNL…HEIFVDYELE (79 aa)) form the RRM domain. Lys-172 is covalently cross-linked (Glycyl lysine isopeptide (Lys-Gly) (interchain with G-Cter in SUMO2)). A disordered region spans residues 187–217 (SRSRERHWDSRTRDRDHDRGREKRWQEREPT). Over residues 192–217 (RHWDSRTRDRDHDRGREKRWQEREPT) the composition is skewed to basic and acidic residues.

Component of the U11/U12 snRNPs that are part of the U12-type spliceosome. As to expression, expressed in heart, liver, skeletal muscle and pancreas.

It localises to the nucleus. In Homo sapiens (Human), this protein is U11/U12 small nuclear ribonucleoprotein 35 kDa protein (SNRNP35).